The primary structure comprises 219 residues: Oligoribonuclease (219 aa).

One can recognise an Exonuclease domain in the interval 30 to 193 (LVWLDMEMTG…ADIVESIEEL (164 aa)). The active site involves tyrosine 151.

Belongs to the oligoribonuclease family.

Its subcellular location is the cytoplasm. 3'-to-5' exoribonuclease specific for small oligoribonucleotides. The protein is Oligoribonuclease of Ralstonia nicotianae (strain ATCC BAA-1114 / GMI1000) (Ralstonia solanacearum).